The primary structure comprises 236 residues: DNA repair protein RecO (236 aa).

The protein belongs to the RecO family.

Involved in DNA repair and RecF pathway recombination. This Photobacterium profundum (strain SS9) protein is DNA repair protein RecO.